The chain runs to 305 residues: D-alanine--D-alanine ligase (305 aa).

One can recognise an ATP-grasp domain in the interval 99–300 (KLFFEKAGIR…YEEMIQTFVN (202 aa)). ATP is bound at residue 126 to 181 (NFTGTYPVVVKPNQEGSTIGLTVAETEEELLQGIEEAFRHDDTILIEEFIAGTEVT).

The protein belongs to the D-alanine--D-alanine ligase family.

It localises to the cytoplasm. The enzyme catalyses 2 D-alanine + ATP = D-alanyl-D-alanine + ADP + phosphate + H(+). It participates in cell wall biogenesis; peptidoglycan biosynthesis. In terms of biological role, cell wall formation. This Halalkalibacterium halodurans (strain ATCC BAA-125 / DSM 18197 / FERM 7344 / JCM 9153 / C-125) (Bacillus halodurans) protein is D-alanine--D-alanine ligase.